The primary structure comprises 240 residues: Small ribosomal subunit protein uS3 (240 aa).

Positions 39–109 (IRQHIDANLN…QIRINVVEVN (71 aa)) constitute a KH type-2 domain. Positions 216-240 (TSAANAAPLPRRKSRRQQFEDRSEQ) are disordered.

It belongs to the universal ribosomal protein uS3 family. Part of the 30S ribosomal subunit. Forms a tight complex with proteins S10 and S14.

Its function is as follows. Binds the lower part of the 30S subunit head. Binds mRNA in the 70S ribosome, positioning it for translation. In Picosynechococcus sp. (strain ATCC 27264 / PCC 7002 / PR-6) (Agmenellum quadruplicatum), this protein is Small ribosomal subunit protein uS3.